Reading from the N-terminus, the 386-residue chain is MLKALHFGAGNIGRGFIGYLLNKSGYEVTFVDISKEIVDNINKYKKYNVIILKEPVEKEEVKEVKALHLEEEDKVLDAFLEADMVTTSVGVSNLSSIGGRLKKYLKARKEKNEKPLDIMACENALFATDVLRERVVKEEDDDFITYLNLKVGFPNTAVDRIVPAVKIDKKLPVDVAVEEFFEWDIEKNKIKGNLQIEGVELVDDLKPYIERKLFLLNGAHATTAYLGYLRGYTYIHQAIKDDNIRAIVKGMQEEISTALSKKYDVDKESLMAYAEKVIKRFENPYLQDEVTRVGREPLRKLSSEDRLIAPLKLCSEVGITPNFILYGIAAGLLFDYKEDAQAVKMREYVEQFGIKKAVNVITGLEEESDLVEEIEKRYFELKGKLI.

Residue 4–15 participates in NAD(+) binding; the sequence is ALHFGAGNIGRG.

It belongs to the mannitol dehydrogenase family.

It carries out the reaction D-mannitol 1-phosphate + NAD(+) = beta-D-fructose 6-phosphate + NADH + H(+). This Caldanaerobacter subterraneus subsp. tengcongensis (strain DSM 15242 / JCM 11007 / NBRC 100824 / MB4) (Thermoanaerobacter tengcongensis) protein is Mannitol-1-phosphate 5-dehydrogenase.